The chain runs to 242 residues: Cysteine-rich venom protein helothermine (242 aa).

Positions 1–19 (MILLSLYLCLAAMLHQSEG) are cleaved as a signal peptide. Residues 41-169 (DKHNNLRRIV…TYKYYQVCQY (129 aa)) enclose the SCP domain. 8 disulfides stabilise this stretch: Cys77–Cys155, Cys94–Cys170, Cys150–Cys167, Cys189–Cys196, Cys192–Cys201, Cys205–Cys237, Cys214–Cys231, and Cys223–Cys235. Positions 205-237 (CKQNDVYNNCPDLKKQVGCGHPIMKDCMATCKC) constitute a ShKT domain.

This sequence belongs to the CRISP family. As to expression, expressed by the venom gland.

It is found in the secreted. Its function is as follows. Alters a variety of ion channel activities, including voltage-gated potassium channels (Kv), voltage-gated calcium channels (L-, N-, and P-type) (Cav) and ryanodine receptors (RyR). Is toxic to mice (causes lethargy, partial paralysis of rear limbs and lowering of body temperature). This chain is Cysteine-rich venom protein helothermine, found in Heloderma horridum horridum (Mexican beaded lizard).